The primary structure comprises 172 residues: uncharacterized protein (172 aa).

Disordered stretches follow at residues 1 to 54 (MPRR…GGSS) and 82 to 111 (ITGG…SVPE). Residues 14 to 29 (AAPARSASTAAALPPR) show a composition bias toward low complexity. Over residues 30 to 47 (TMAPPPAPSRVQQAPPPT) the composition is skewed to pro residues. The segment covering 89-109 (SGSNNAPADTSVPQSSYSNSV) has biased composition (polar residues).

This is an uncharacterized protein from Schizosaccharomyces pombe (strain 972 / ATCC 24843) (Fission yeast).